The primary structure comprises 421 residues: ATP-dependent RNA helicase RhlB (421 aa).

A Q motif motif is present at residues 9–37; that stretch reads QKFSDFALHPQVVEALEKKGFYNCTPIQA. The region spanning 40 to 219 is the Helicase ATP-binding domain; that stretch reads LPLTLAGRDV…FEQMNNAEYV (180 aa). 53 to 60 serves as a coordination point for ATP; that stretch reads AQTGTGKT. The DEAD box signature appears at 165 to 168; sequence DEAD. Residues 245–390 enclose the Helicase C-terminal domain; it reads RLLQTLIEEE…VSKYNPEALM (146 aa). The segment at 396–421 is disordered; it reads PLRLTRSRPGNGPRRAGAPRNRRRSG. The segment covering 402 to 414 has biased composition (low complexity); the sequence is SRPGNGPRRAGAP.

Belongs to the DEAD box helicase family. RhlB subfamily. Component of the RNA degradosome, which is a multiprotein complex involved in RNA processing and mRNA degradation.

It localises to the cytoplasm. It catalyses the reaction ATP + H2O = ADP + phosphate + H(+). Its function is as follows. DEAD-box RNA helicase involved in RNA degradation. Has RNA-dependent ATPase activity and unwinds double-stranded RNA. The chain is ATP-dependent RNA helicase RhlB from Salmonella arizonae (strain ATCC BAA-731 / CDC346-86 / RSK2980).